Consider the following 531-residue polypeptide: Probable calcium-binding mitochondrial carrier F17E5.2 (531 aa).

4 EF-hand domains span residues 70–105 (EKEK…QAHI), 106–135 (PASV…NYVI), 136–171 (AHEA…MGVN), and 172–207 (LDDQ…YPST). The Ca(2+) site is built by Asp-83, Asp-85, Asp-87, Ser-89, and Asp-94. Ca(2+) is bound by residues Asp-149, Asn-151, Asp-153, Glu-155, and Glu-160. 3 Solcar repeats span residues 242-328 (GVWW…IKRW), 338-424 (LSTI…LKSM), and 435-525 (PGVL…VRKQ). 6 consecutive transmembrane segments (helical) span residues 248-265 (LVAG…TAPF), 303-322 (GNGI…FMCY), 348-361 (SSAG…IYPM), 399-418 (GYLP…LTVY), 441-458 (LACG…SYPL), and 500-517 (GITP…ISYV).

Belongs to the mitochondrial carrier (TC 2.A.29) family.

It is found in the mitochondrion inner membrane. Functionally, calcium-dependent mitochondrial solute carrier. This Caenorhabditis elegans protein is Probable calcium-binding mitochondrial carrier F17E5.2.